We begin with the raw amino-acid sequence, 249 residues long: DNA repair protein RecO (249 aa).

The protein belongs to the RecO family.

Involved in DNA repair and RecF pathway recombination. This chain is DNA repair protein RecO, found in Lawsonia intracellularis (strain PHE/MN1-00).